The primary structure comprises 518 residues: Mitochondrial 2-methylisocitrate lyase (518 aa).

This sequence belongs to the isocitrate lyase/PEP mutase superfamily. Isocitrate lyase family.

The protein resides in the mitochondrion matrix. The protein localises to the cytoplasm. The enzyme catalyses (2S,3R)-3-hydroxybutane-1,2,3-tricarboxylate = pyruvate + succinate. The protein operates within organic acid metabolism; propanoate degradation. Catalyzes the formation of pyruvate and succinate from 2-methylisocitrate during the metabolism of endogenous propionyl-CoA. Does not act on isocitrate. The polypeptide is Mitochondrial 2-methylisocitrate lyase (icl2) (Schizosaccharomyces pombe (strain 972 / ATCC 24843) (Fission yeast)).